The chain runs to 1007 residues: Lysosomal alpha-mannosidase (1007 aa).

The signal sequence occupies residues 1-47 (MGASVLPLGLGAGDCQSSSGRRMSACLPRTALSFLLSLLLATPGARA). 2 cysteine pairs are disulfide-bonded: cysteine 53-cysteine 356 and cysteine 266-cysteine 271. Zn(2+) is bound by residues histidine 70 and aspartate 72. Asparagine 131 carries N-linked (GlcNAc...) asparagine glycosylation. A Zn(2+)-binding site is contributed by aspartate 194. The active-site Nucleophile is the aspartate 194. Asparagine 308, asparagine 343, and asparagine 365 each carry an N-linked (GlcNAc...) asparagine glycan. Intrachain disulfides connect cysteine 410–cysteine 470 and cysteine 491–cysteine 499. Histidine 444 contributes to the Zn(2+) binding site. N-linked (GlcNAc...) asparagine glycosylation is found at asparagine 495, asparagine 540, asparagine 639, asparagine 686, asparagine 760, and asparagine 927.

Belongs to the glycosyl hydrolase 38 family. It depends on Zn(2+) as a cofactor.

The protein resides in the lysosome. It catalyses the reaction Hydrolysis of terminal, non-reducing alpha-D-mannose residues in alpha-D-mannosides.. Necessary for the catabolism of N-linked carbohydrates released during glycoprotein turnover. In Cavia porcellus (Guinea pig), this protein is Lysosomal alpha-mannosidase (MAN2B1).